Here is a 534-residue protein sequence, read N- to C-terminus: Origin of replication complex subunit 5 (534 aa).

The tract at residues 1–36 (MPPKEESSKVTRRSTRSSASVTVENSEPIESHTPTI) is disordered. ATP is bound at residue 83–90 (GGASTGKT). The Nuclear localization signal motif lies at 129 to 136 (HRKCSLNG). The tract at residues 397–428 (MFDSTGGMDNRKRKRKASEKSMEKKEIAEQEA) is disordered. The segment covering 414–424 (SEKSMEKKEIA) has biased composition (basic and acidic residues).

This sequence belongs to the ORC5 family. As to quaternary structure, component of the origin recognition complex (ORC) composed of at least ORC1 (ORC1A or ORC1B), ORC2, ORC3, ORC4, ORC5 and ORC6. ORC is regulated in a cell-cycle and development dependent manner. It is sequentially assembled at the exit from anaphase of mitosis and disassembled as cells enter S phase. Interacts directly with ORC1A, ORC1B, ORC2, ORC3, ORC4 and ORC6. In terms of tissue distribution, follow a cell-cycle regulation with a peak at the G1/S-phase. Mostly expressed in flower buds and cauline leaves, and, to a lower exent, in roots, leaves and stems. Expressed at low levels ubiquitously.

Its subcellular location is the nucleus. Functionally, component of the origin recognition complex (ORC) that binds origins of replication. DNA-binding is ATP-dependent. The specific DNA sequences that define origins of replication have not been identified yet. ORC is required to assemble the pre-replication complex necessary to initiate DNA replication. The polypeptide is Origin of replication complex subunit 5 (Arabidopsis thaliana (Mouse-ear cress)).